The chain runs to 614 residues: WD repeat-containing protein 26 (614 aa).

Composition is skewed to low complexity over residues 1–19 and 34–44; these read MQAN…AGSG and SNGVLSSNNGL. The disordered stretch occupies residues 1 to 65; the sequence is MQANGAAAAA…PGGRKKKRLS (65 aa). The region spanning 67-99 is the LisH domain; it reads ADEDVIRLIGQHLHGLGLNQTVDLLMQESGCRL. Residues 100 to 184 enclose the CTLH domain; sequence EHPSATKFRN…EYLEDGKVLE (85 aa). WD repeat units follow at residues 306 to 345, 352 to 391, 397 to 437, 477 to 516, 519 to 561, and 564 to 604; these read EHCN…HQLK, GHAY…GELR, SHED…DSWE, QEDH…LVRK, GVTQ…PIAE, and GHTR…DNQE.

As to quaternary structure, forms homooligomers. Identified in the CTLH complex that contains at least MAEA, RMND5A (or alternatively its paralog RMND5B), GID8, WDR26, and RANBP9 and/or RANBP10. Interacts with DDB1-CUL4A/B E3 ligase complexes.

The protein localises to the cytoplasm. The protein resides in the nucleus. It localises to the mitochondrion. In terms of biological role, G-beta-like protein involved in cell signal transduction. Acts as a negative regulator in MAPK signaling pathway. Functions as a scaffolding protein to promote G beta:gamma-mediated PLCB2 plasma membrane translocation and subsequent activation in leukocytes. Core component of the CTLH E3 ubiquitin-protein ligase complex that mediates ubiquitination and subsequent proteasomal degradation of target proteins. Acts as a negative regulator of the canonical Wnt signaling pathway through preventing ubiquitination of beta-catenin CTNNB1 by the beta-catenin destruction complex, thus negatively regulating CTNNB1 degradation. Serves as a scaffold to coordinate PI3K/AKT pathway-driven cell growth and migration. Protects cells from oxidative stress-induced apoptosis via the down-regulation of AP-1 transcriptional activity as well as by inhibiting cytochrome c release from mitochondria. Also protects cells by promoting hypoxia-mediated autophagy and mitophagy. This chain is WD repeat-containing protein 26 (wdr26), found in Xenopus tropicalis (Western clawed frog).